The sequence spans 265 residues: Imidazole glycerol phosphate synthase subunit HisF (265 aa).

Residues aspartate 11 and aspartate 130 contribute to the active site.

This sequence belongs to the HisA/HisF family. As to quaternary structure, heterodimer of HisH and HisF.

Its subcellular location is the cytoplasm. It catalyses the reaction 5-[(5-phospho-1-deoxy-D-ribulos-1-ylimino)methylamino]-1-(5-phospho-beta-D-ribosyl)imidazole-4-carboxamide + L-glutamine = D-erythro-1-(imidazol-4-yl)glycerol 3-phosphate + 5-amino-1-(5-phospho-beta-D-ribosyl)imidazole-4-carboxamide + L-glutamate + H(+). The protein operates within amino-acid biosynthesis; L-histidine biosynthesis; L-histidine from 5-phospho-alpha-D-ribose 1-diphosphate: step 5/9. Its function is as follows. IGPS catalyzes the conversion of PRFAR and glutamine to IGP, AICAR and glutamate. The HisF subunit catalyzes the cyclization activity that produces IGP and AICAR from PRFAR using the ammonia provided by the HisH subunit. The protein is Imidazole glycerol phosphate synthase subunit HisF of Idiomarina loihiensis (strain ATCC BAA-735 / DSM 15497 / L2-TR).